Here is a 447-residue protein sequence, read N- to C-terminus: GTPase Der (447 aa).

EngA-type G domains follow at residues Lys-4 to Glu-165 and Leu-180 to Asn-357. Residues Gly-10 to Ser-17, Asp-57 to Leu-61, Asn-119 to Glu-122, Gly-186 to Ser-193, Asp-233 to Leu-237, and Asn-298 to Asp-301 contribute to the GTP site. One can recognise a KH-like domain in the interval Lys-358 to Lys-443.

The protein belongs to the TRAFAC class TrmE-Era-EngA-EngB-Septin-like GTPase superfamily. EngA (Der) GTPase family. As to quaternary structure, associates with the 50S ribosomal subunit.

Functionally, GTPase that plays an essential role in the late steps of ribosome biogenesis. The protein is GTPase Der of Rickettsia prowazekii (strain Madrid E).